The chain runs to 392 residues: Riboflavin biosynthesis protein PYRD, chloroplastic (392 aa).

A chloroplast-targeting transit peptide spans 1 to 26; that stretch reads MASSLVSRPHLTQRPVRAATLASATR. A CMP/dCMP-type deaminase domain is found at 46–168; that stretch reads LDDAHYMRRC…KLQGAGISVR (123 aa). His-95 is a Zn(2+) binding site. The active-site Proton donor is Glu-97. Zn(2+) contacts are provided by Cys-120 and Cys-129.

Zn(2+) serves as cofactor.

The protein resides in the plastid. It is found in the chloroplast. It carries out the reaction 2,5-diamino-6-hydroxy-4-(5-phosphoribosylamino)-pyrimidine + H2O + H(+) = 5-amino-6-(5-phospho-D-ribosylamino)uracil + NH4(+). The protein operates within cofactor biosynthesis; riboflavin biosynthesis; 5-amino-6-(D-ribitylamino)uracil from GTP: step 2/4. Functionally, monofunctional pyrimidine deaminase involved in the riboflavin biosynthesis pathway. Also has a reductase domain that lacks catalytically essential substrate-binding residues. The chain is Riboflavin biosynthesis protein PYRD, chloroplastic (PYRD) from Zea mays (Maize).